Here is a 118-residue protein sequence, read N- to C-terminus: DNA-binding protein inhibitor ID-3 (118 aa).

A bHLH domain is found at 32–84; sequence SHKGPGVDEPMGLLYDMNGCYSKLKELVPGIPQGSKLSQVEILQHVIDYIFDL.

Homodimer. Heterodimer with other HLH proteins. Interacts (via HLH domain) with the bHLH protein hes4/hairy2 (via Orange domain). Interacts with stat3.

It is found in the nucleus. Transcriptional regulator (lacking a basic DNA binding domain) which negatively regulates the basic helix-loop-helix (bHLH) transcription factors by forming heterodimers and inhibiting their DNA binding and transcriptional activity. Influences cell fate decisions in the embryo by sequestering and blocking the activity of the bHLH transcription factors that control these decisions. Inhibits the binding of myogenic bHLH-containing complexes to E-box DNA, thereby preventing activation of muscle-specific target genes. Also inhibits the activity of neurogenic factor neurod1/neuroD. Plays a role in cell cycle progression and survival of neural crest progenitors; binding to either hes4-B/hairy2b or stat3 blocks the formation of transcription factor complexes and the repressor function of hes4-B/hairy2B, to allow neural crest progenitors to differentiate. May play a role in the regulation of the circadian rhythm. The sequence is that of DNA-binding protein inhibitor ID-3 (id3) from Xenopus tropicalis (Western clawed frog).